The following is a 445-amino-acid chain: MIWKSLFSALAILTHILPALTAPALDSELSSQSEDKYVFAHFMVGIVKDYQLEDWKEDMTTAQSIGIDAFALNCASIDSYTPTQLALAYEAAEQVNFKVVISFDFAYWTNGDTEKITEYMKQYAGHPAQMQYKGAAVVSTFVGDSFNWDAVKQNTPHPIYAVPNLQDPAEATTGPAKSADGAFSWLAWPTDGGNSIIPGPMTTVWDDRFVHFLAGKTYMAPVSPWFSTHFNTKNWVFVCENLPTLRWEQMLSLQPDLIEIISWNDYGESHYIGPYSAHHSDDGSSQWATNMPHDGWRNLFKPYIAAYKSGAKTPTVEADEVVYWYRPTPKGVVCTGDTLSAPMGADMLSDSIFVATMLTSPGTLTVQSGNNAPVDIEVPAGIVTSNVTMGVGAQSFKVARDGQTILSGQGGLDVKDSCVHYNFNVYVGSTKGGDGSNTTGARGSM.

An N-terminal signal peptide occupies residues 1–21 (MIWKSLFSALAILTHILPALT). 2 N-linked (GlcNAc...) asparagine glycosylation sites follow: Asn386 and Asn437.

It belongs to the glycosyl hydrolase 71 family. Monomer.

It localises to the secreted. The catalysed reaction is Endohydrolysis of (1-&gt;3)-alpha-D-glucosidic linkages in isolichenin, pseudonigeran and nigeran.. Its function is as follows. Hydrolyzes 1,3-alpha-glucan predominantly into pentasaccharides. May enhance the efficacy of fungal antibiotics by degrading bacterial exopolysaccharides. This chain is Mutanase Pc12g07500, found in Penicillium rubens (strain ATCC 28089 / DSM 1075 / NRRL 1951 / Wisconsin 54-1255) (Penicillium chrysogenum).